We begin with the raw amino-acid sequence, 486 residues long: Cardiolipin synthase A (486 aa).

The next 2 membrane-spanning stretches (helical) occupy residues 3 to 23 (IFYN…IANI) and 38 to 58 (MSWL…WFFF). PLD phosphodiesterase domains lie at 219–246 (VDVR…VDPY) and 399–426 (QKGL…DMRS). Residues His-224, Lys-226, Asp-231, His-404, Lys-406, and Asp-411 contribute to the active site.

Belongs to the phospholipase D family. Cardiolipin synthase subfamily. ClsA sub-subfamily.

It localises to the cell inner membrane. It carries out the reaction 2 a 1,2-diacyl-sn-glycero-3-phospho-(1'-sn-glycerol) = a cardiolipin + glycerol. Functionally, catalyzes the reversible phosphatidyl group transfer from one phosphatidylglycerol molecule to another to form cardiolipin (CL) (diphosphatidylglycerol) and glycerol. This Buchnera aphidicola subsp. Acyrthosiphon pisum (strain 5A) protein is Cardiolipin synthase A.